Reading from the N-terminus, the 364-residue chain is DNA replication and repair protein RecF (364 aa).

30 to 37 (GNNAQGKT) is an ATP binding site.

It belongs to the RecF family.

It localises to the cytoplasm. Functionally, the RecF protein is involved in DNA metabolism; it is required for DNA replication and normal SOS inducibility. RecF binds preferentially to single-stranded, linear DNA. It also seems to bind ATP. This Clostridium botulinum (strain Okra / Type B1) protein is DNA replication and repair protein RecF.